Reading from the N-terminus, the 327-residue chain is Delta(3,5)-Delta(2,4)-dienoyl-CoA isomerase, mitochondrial (327 aa).

The transit peptide at 1–33 (MATAMTVSSKLLGLLMQQLRGTRQLYFNVSLRS) directs the protein to the mitochondrion. Substrate-binding positions include 115 to 119 (SGIDL) and G173. At K230 the chain carries N6-succinyllysine. At S267 the chain carries Phosphoserine. K316 is modified (N6-succinyllysine). Positions 325–327 (SKL) match the Microbody targeting signal motif. K326 bears the N6-acetyllysine mark.

Belongs to the enoyl-CoA hydratase/isomerase family. In terms of assembly, homohexamer. Expressed in heart and liver (at protein level).

It localises to the mitochondrion. It is found in the peroxisome. It carries out the reaction (3E,5Z)-octadienoyl-CoA = (2E,4E)-octadienoyl-CoA. It catalyses the reaction (3E,5Z,8Z,11Z,14Z)-eicosapentaenoyl-CoA = (2E,4E,8Z,11Z,14Z)-eicosapentaenoyl-CoA. The protein operates within lipid metabolism; fatty acid beta-oxidation. Functionally, isomerization of 3-trans,5-cis-dienoyl-CoA to 2-trans,4-trans-dienoyl-CoA. The polypeptide is Delta(3,5)-Delta(2,4)-dienoyl-CoA isomerase, mitochondrial (Rattus norvegicus (Rat)).